A 380-amino-acid chain; its full sequence is MFRLLTAGESHGKSLVGVIEGFPANVKIDIEEINRDLGRRQRGYGRGGRMKIEKDRVEILSGVRGGKTLGSPISFLIENKDYANWEPYMNPEAVDGEEKRVTQPRPGHGDLTGTLKYGFDDIRNVLERSSARETAVRVAIGSLAKQLMREFHIEVYSHVTAIGSVSLGEPVENIEKIKRAEDSEVRCLDPEVEKAMIEEIKRAKEEGDSLGGIFEIHVTGVPRGLGSYVQWDHKLDAKLAHALMSIQAIKGVEVGCGFDQAQKKGSQVHDEIFFSQEKDYYRKTNYAGGIEGGMSNGENIHLRCAMKPIPTLYKPLRTVDIETKEAVLATVERSDSCAVPAASIVGEMVAITVIAQEFLKKFGSDSLEEIRKTWKSYTSI.

Residues R40 and R46 each coordinate NADP(+). Residues 128–130, 247–248, G292, 307–311, and R333 contribute to the FMN site; these read RSS, QA, and KPIPT.

The protein belongs to the chorismate synthase family. In terms of assembly, homotetramer. FMNH2 serves as cofactor.

It carries out the reaction 5-O-(1-carboxyvinyl)-3-phosphoshikimate = chorismate + phosphate. It participates in metabolic intermediate biosynthesis; chorismate biosynthesis; chorismate from D-erythrose 4-phosphate and phosphoenolpyruvate: step 7/7. Catalyzes the anti-1,4-elimination of the C-3 phosphate and the C-6 proR hydrogen from 5-enolpyruvylshikimate-3-phosphate (EPSP) to yield chorismate, which is the branch point compound that serves as the starting substrate for the three terminal pathways of aromatic amino acid biosynthesis. This reaction introduces a second double bond into the aromatic ring system. The chain is Chorismate synthase from Alkaliphilus metalliredigens (strain QYMF).